The chain runs to 143 residues: Small ribosomal subunit protein uS11c (143 aa).

It belongs to the universal ribosomal protein uS11 family. Part of the 30S ribosomal subunit.

Its subcellular location is the plastid. It is found in the chloroplast. This is Small ribosomal subunit protein uS11c from Cenchrus americanus (Pearl millet).